The primary structure comprises 439 residues: Serine hydroxymethyltransferase (439 aa).

Residues 1–20 (MNAPHRDETTASHRDDGFFT) form a disordered region. Residues L136 and 140 to 142 (GHL) contribute to the (6S)-5,6,7,8-tetrahydrofolate site. Residue K245 is modified to N6-(pyridoxal phosphate)lysine.

The protein belongs to the SHMT family. In terms of assembly, homodimer. The cofactor is pyridoxal 5'-phosphate.

The protein resides in the cytoplasm. The enzyme catalyses (6R)-5,10-methylene-5,6,7,8-tetrahydrofolate + glycine + H2O = (6S)-5,6,7,8-tetrahydrofolate + L-serine. Its pathway is one-carbon metabolism; tetrahydrofolate interconversion. The protein operates within amino-acid biosynthesis; glycine biosynthesis; glycine from L-serine: step 1/1. Functionally, catalyzes the reversible interconversion of serine and glycine with tetrahydrofolate (THF) serving as the one-carbon carrier. This reaction serves as the major source of one-carbon groups required for the biosynthesis of purines, thymidylate, methionine, and other important biomolecules. Also exhibits THF-independent aldolase activity toward beta-hydroxyamino acids, producing glycine and aldehydes, via a retro-aldol mechanism. The sequence is that of Serine hydroxymethyltransferase from Jannaschia sp. (strain CCS1).